The sequence spans 359 residues: Peptide chain release factor 1 (359 aa).

Position 236 is an N5-methylglutamine (Gln-236).

The protein belongs to the prokaryotic/mitochondrial release factor family. Methylated by PrmC. Methylation increases the termination efficiency of RF1.

It localises to the cytoplasm. In terms of biological role, peptide chain release factor 1 directs the termination of translation in response to the peptide chain termination codons UAG and UAA. The polypeptide is Peptide chain release factor 1 (Streptococcus mutans serotype c (strain ATCC 700610 / UA159)).